Reading from the N-terminus, the 431-residue chain is Adenylosuccinate synthetase (431 aa).

Residues 12–18 and 40–42 contribute to the GTP site; these read GDEGKGK and GHT. The active-site Proton acceptor is D13. The Mg(2+) site is built by D13 and G40. Residues 13-16, 38-41, T129, R143, Q224, T239, and R303 contribute to the IMP site; these read DEGK and NAGH. The active-site Proton donor is the H41. 299–305 contacts substrate; that stretch reads VTTGRAR. GTP is bound by residues R305, 331 to 333, and 413 to 415; these read KLD and GVG.

It belongs to the adenylosuccinate synthetase family. Homodimer. Mg(2+) serves as cofactor.

It localises to the cytoplasm. It carries out the reaction IMP + L-aspartate + GTP = N(6)-(1,2-dicarboxyethyl)-AMP + GDP + phosphate + 2 H(+). The protein operates within purine metabolism; AMP biosynthesis via de novo pathway; AMP from IMP: step 1/2. Its function is as follows. Plays an important role in the de novo pathway of purine nucleotide biosynthesis. Catalyzes the first committed step in the biosynthesis of AMP from IMP. The sequence is that of Adenylosuccinate synthetase from Mycobacterium sp. (strain KMS).